A 234-amino-acid polypeptide reads, in one-letter code: Transcriptional activator protein TraR (234 aa).

Residues Thr167 to Lys232 form the HTH luxR-type domain. The H-T-H motif DNA-binding region spans Met191–Arg210.

Belongs to the autoinducer-regulated transcriptional regulatory protein family.

Functionally, positive regulation of conjugal transfer of Ti plasmids. TraR activates target genes in the presence of AAI and also activates traR and traI themselves. In Rhizobium radiobacter (Agrobacterium tumefaciens), this protein is Transcriptional activator protein TraR (traR).